Consider the following 200-residue polypeptide: Recombination protein RecR (200 aa).

The C4-type zinc finger occupies 59–74 (CSVCGSLDTSDPCAIC). Residues 82–177 (RLLCVVEEVG…SVTMLARGVP (96 aa)) enclose the Toprim domain.

The protein belongs to the RecR family.

In terms of biological role, may play a role in DNA repair. It seems to be involved in an RecBC-independent recombinational process of DNA repair. It may act with RecF and RecO. This chain is Recombination protein RecR, found in Caulobacter sp. (strain K31).